A 98-amino-acid chain; its full sequence is Complement inhibitor RaCI2 (98 aa).

The first 21 residues, 1–21, serve as a signal peptide directing secretion; sequence MNAVTVLAFTAFALIVHDCYS. 3 disulfides stabilise this stretch: C35–C59, C40–C61, and C55–C76.

This sequence belongs to the RaCI family. In terms of tissue distribution, expressed in salivary glands.

It is found in the secreted. Its function is as follows. Complement inhibitor. Prevents complement-mediated C5 activation by binding to C5. Binds C5 at a different binding site than the other tick complement inhibitors OmCI and CirpT1, and the drug eculizumab. The sequence is that of Complement inhibitor RaCI2 from Rhipicephalus microplus (Cattle tick).